A 178-amino-acid polypeptide reads, in one-letter code: Probable DNA-directed RNA polymerase subunit delta (178 aa).

In terms of domain architecture, HTH HARE-type spans leucine 14–tryptophan 81. Over residues aspartate 120–serine 143 the composition is skewed to acidic residues. The tract at residues aspartate 120–asparagine 178 is disordered.

This sequence belongs to the RpoE family. RNAP is composed of a core of 2 alpha, a beta and a beta' subunits. The core is associated with a delta subunit and one of several sigma factors.

In terms of biological role, participates in both the initiation and recycling phases of transcription. In the presence of the delta subunit, RNAP displays an increased specificity of transcription, a decreased affinity for nucleic acids, and an increased efficiency of RNA synthesis because of enhanced recycling. This chain is Probable DNA-directed RNA polymerase subunit delta, found in Pediococcus pentosaceus (strain ATCC 25745 / CCUG 21536 / LMG 10740 / 183-1w).